A 693-amino-acid chain; its full sequence is DNA-directed RNA polymerase subunit beta' (693 aa).

Zn(2+)-binding residues include Cys76, Cys78, Cys94, and Cys97. Residues Asp496, Asp498, and Asp500 each coordinate Mg(2+).

This sequence belongs to the RNA polymerase beta' chain family. RpoC1 subfamily. In terms of assembly, in plastids the minimal PEP RNA polymerase catalytic core is composed of four subunits: alpha, beta, beta', and beta''. When a (nuclear-encoded) sigma factor is associated with the core the holoenzyme is formed, which can initiate transcription. It depends on Mg(2+) as a cofactor. The cofactor is Zn(2+).

The protein localises to the plastid. It localises to the chloroplast. It carries out the reaction RNA(n) + a ribonucleoside 5'-triphosphate = RNA(n+1) + diphosphate. In terms of biological role, DNA-dependent RNA polymerase catalyzes the transcription of DNA into RNA using the four ribonucleoside triphosphates as substrates. The sequence is that of DNA-directed RNA polymerase subunit beta' from Nuphar advena (Common spatterdock).